Consider the following 571-residue polypeptide: WAP, Kazal, immunoglobulin, Kunitz and NTR domain-containing protein 2 (571 aa).

The N-terminal stretch at 1 to 29 (MCAPGYHRFWFHWGLLLLLLLEAPLRGLA) is a signal peptide. One can recognise a WAP domain in the interval 34-87 (RYSHAGICPNDMNPNLWVDAQSTCKRECETDQECETYEKCCPNVCGTKSCVAAR). Disulfide bonds link Cys41/Cys74, Cys57/Cys78, Cys61/Cys73, Cys67/Cys83, Cys129/Cys159, Cys133/Cys152, Cys141/Cys170, and Cys226/Cys282. Residues 121-172 (WDGQPVCKCKDRCEKEPSFTCASDGLTYYNRCFMDAEACSKGITLSVVTCRY) enclose the Kazal-like domain. An Ig-like C2-type domain is found at 205-298 (PALLNHPVHQ…GVLRADFPLS (94 aa)). Asn314 carries N-linked (GlcNAc...) asparagine glycosylation. Disulfide bonds link Cys323–Cys373, Cys332–Cys356, Cys348–Cys369, Cys381–Cys431, Cys390–Cys414, Cys406–Cys427, Cys440–Cys510, Cys443–Cys512, and Cys454–Cys561. 2 BPTI/Kunitz inhibitor domains span residues 323-373 (CLKP…MLAC) and 381-431 (CSLP…EESC). In terms of domain architecture, NTR spans 440 to 561 (CRACKPRQKL…LREVMYKKTC (122 aa)). A glycan (N-linked (GlcNAc...) asparagine) is linked at Asn514.

It belongs to the WFIKKN family. In terms of assembly, interacts with both mature and propeptide myostatin/MSTN. As to expression, widely expressed, with high expression in skeletal muscle and heart. Also expressed in brain, lung and testis. Weakly expressed in liver and kidney.

Its subcellular location is the secreted. Its function is as follows. Protease-inhibitor that contains multiple distinct protease inhibitor domains. Probably has serine protease- and metalloprotease-inhibitor activity. Inhibits the biological activity of mature myostatin, but not activin. This chain is WAP, Kazal, immunoglobulin, Kunitz and NTR domain-containing protein 2 (Wfikkn2), found in Mus musculus (Mouse).